The sequence spans 266 residues: Undecaprenyl-diphosphatase (266 aa).

8 helical membrane-spanning segments follow: residues 1 to 21, 43 to 63, 81 to 101, 107 to 127, 145 to 165, 183 to 203, 219 to 239, and 245 to 265; these read MMSW…TEFL, ASVF…VIYW, LYGI…GFLF, TLFT…FMLI, LTPK…WPGF, HLAA…ATGY, LFIT…KVFI, and ISLR…YLCI.

This sequence belongs to the UppP family.

The protein resides in the cell membrane. The enzyme catalyses di-trans,octa-cis-undecaprenyl diphosphate + H2O = di-trans,octa-cis-undecaprenyl phosphate + phosphate + H(+). In terms of biological role, catalyzes the dephosphorylation of undecaprenyl diphosphate (UPP). Confers resistance to bacitracin. The chain is Undecaprenyl-diphosphatase from Lawsonia intracellularis (strain PHE/MN1-00).